A 439-amino-acid polypeptide reads, in one-letter code: 5-methylthioadenosine/S-adenosylhomocysteine deaminase (439 aa).

Zn(2+) contacts are provided by histidine 70 and histidine 72. Glutamate 99 and histidine 192 together coordinate substrate. Histidine 219 contacts Zn(2+). Residues glutamate 222 and aspartate 307 each coordinate substrate. A Zn(2+)-binding site is contributed by aspartate 307.

The protein belongs to the metallo-dependent hydrolases superfamily. MTA/SAH deaminase family. Zn(2+) serves as cofactor.

It carries out the reaction S-adenosyl-L-homocysteine + H2O + H(+) = S-inosyl-L-homocysteine + NH4(+). The catalysed reaction is S-methyl-5'-thioadenosine + H2O + H(+) = S-methyl-5'-thioinosine + NH4(+). Catalyzes the deamination of 5-methylthioadenosine and S-adenosyl-L-homocysteine into 5-methylthioinosine and S-inosyl-L-homocysteine, respectively. Is also able to deaminate adenosine. This is 5-methylthioadenosine/S-adenosylhomocysteine deaminase from Thermodesulfovibrio yellowstonii (strain ATCC 51303 / DSM 11347 / YP87).